Here is a 138-residue protein sequence, read N- to C-terminus: Invertebrate-type lysozyme 6 (138 aa).

The first 18 residues, 1–18 (MFVKLCGILAFAVTYASS), serve as a signal peptide directing secretion. An I-type lysozyme domain is found at 19–138 (DCLQCICKKE…WNGIKGLGCS (120 aa)). 6 disulfide bridges follow: Cys-20/Cys-106, Cys-25/Cys-31, Cys-36/Cys-45, Cys-58/Cys-86, Cys-76/Cys-82, and Cys-98/Cys-120. The Proton donor role is filled by Glu-28. Asp-39 acts as the Nucleophile in catalysis. Residue 51–57 (KLSYYKD) coordinates substrate. Substrate-binding positions include Tyr-90 and 113 to 115 (HNG).

It belongs to the glycosyl hydrolase 22 family. Type-I lysozyme subfamily. Expressed in pharyngeal gland cells and duct projections, coelomocytes and intestine.

The catalysed reaction is Hydrolysis of (1-&gt;4)-beta-linkages between N-acetylmuramic acid and N-acetyl-D-glucosamine residues in a peptidoglycan and between N-acetyl-D-glucosamine residues in chitodextrins.. Its function is as follows. Has bacteriolytic activity against Gram-positive bacteria. The polypeptide is Invertebrate-type lysozyme 6 (Caenorhabditis elegans).